A 319-amino-acid chain; its full sequence is Lambda-crystallin homolog (319 aa).

Residue Ala-2 is modified to N-acetylalanine. Ser-3 is subject to Phosphoserine. Residues Leu-16–Ile-17, Asp-36, Glu-97, and Lys-102 contribute to the NAD(+) site.

The protein belongs to the 3-hydroxyacyl-CoA dehydrogenase family. Homodimer. Widely expressed, with highest levels in liver. Undetectable in skeletal muscle.

It localises to the cytoplasm. The catalysed reaction is L-gulonate + NAD(+) = 3-dehydro-L-gulonate + NADH + H(+). Its activity is regulated as follows. Inhibited by malonate. Its function is as follows. Has high L-gulonate 3-dehydrogenase activity. It also exhibits low dehydrogenase activity toward L-3-hydroxybutyrate (HBA) and L-threonate. The polypeptide is Lambda-crystallin homolog (Cryl1) (Mus musculus (Mouse)).